We begin with the raw amino-acid sequence, 505 residues long: Lysine--tRNA ligase (505 aa).

Mg(2+)-binding residues include E415 and E422.

Belongs to the class-II aminoacyl-tRNA synthetase family. In terms of assembly, homodimer. Mg(2+) is required as a cofactor.

It is found in the cytoplasm. It carries out the reaction tRNA(Lys) + L-lysine + ATP = L-lysyl-tRNA(Lys) + AMP + diphosphate. This Cronobacter sakazakii (strain ATCC BAA-894) (Enterobacter sakazakii) protein is Lysine--tRNA ligase.